The sequence spans 426 residues: Glutamate-1-semialdehyde 2,1-aminomutase (426 aa).

The residue at position 265 (K265) is an N6-(pyridoxal phosphate)lysine.

Belongs to the class-III pyridoxal-phosphate-dependent aminotransferase family. HemL subfamily. In terms of assembly, homodimer. It depends on pyridoxal 5'-phosphate as a cofactor.

The protein resides in the cytoplasm. The catalysed reaction is (S)-4-amino-5-oxopentanoate = 5-aminolevulinate. It functions in the pathway porphyrin-containing compound metabolism; protoporphyrin-IX biosynthesis; 5-aminolevulinate from L-glutamyl-tRNA(Glu): step 2/2. This is Glutamate-1-semialdehyde 2,1-aminomutase from Salmonella paratyphi A (strain ATCC 9150 / SARB42).